We begin with the raw amino-acid sequence, 346 residues long: Holliday junction branch migration complex subunit RuvB (346 aa).

The span at 1-11 shows a compositional bias: polar residues; that stretch reads MTEQRTIASSA. Residues 1–20 form a disordered region; that stretch reads MTEQRTIASSATREDEAADA. Positions 1–183 are large ATPase domain (RuvB-L); it reads MTEQRTIASS…FGIVQRLEFY (183 aa). ATP is bound by residues I22, R23, G64, K67, T68, T69, 130–132, R173, Y183, and R220; that span reads EDF. T68 contributes to the Mg(2+) binding site. The segment at 184 to 254 is small ATPAse domain (RuvB-S); it reads SPQELTRIVI…VAQAAMQMLK (71 aa). Residues 257–346 form a head domain (RuvB-H) region; sequence PEGFDELDRR…PAIGEPGDLF (90 aa). R293, R312, and R317 together coordinate DNA.

The protein belongs to the RuvB family. As to quaternary structure, homohexamer. Forms an RuvA(8)-RuvB(12)-Holliday junction (HJ) complex. HJ DNA is sandwiched between 2 RuvA tetramers; dsDNA enters through RuvA and exits via RuvB. An RuvB hexamer assembles on each DNA strand where it exits the tetramer. Each RuvB hexamer is contacted by two RuvA subunits (via domain III) on 2 adjacent RuvB subunits; this complex drives branch migration. In the full resolvosome a probable DNA-RuvA(4)-RuvB(12)-RuvC(2) complex forms which resolves the HJ.

The protein localises to the cytoplasm. It catalyses the reaction ATP + H2O = ADP + phosphate + H(+). Functionally, the RuvA-RuvB-RuvC complex processes Holliday junction (HJ) DNA during genetic recombination and DNA repair, while the RuvA-RuvB complex plays an important role in the rescue of blocked DNA replication forks via replication fork reversal (RFR). RuvA specifically binds to HJ cruciform DNA, conferring on it an open structure. The RuvB hexamer acts as an ATP-dependent pump, pulling dsDNA into and through the RuvAB complex. RuvB forms 2 homohexamers on either side of HJ DNA bound by 1 or 2 RuvA tetramers; 4 subunits per hexamer contact DNA at a time. Coordinated motions by a converter formed by DNA-disengaged RuvB subunits stimulates ATP hydrolysis and nucleotide exchange. Immobilization of the converter enables RuvB to convert the ATP-contained energy into a lever motion, pulling 2 nucleotides of DNA out of the RuvA tetramer per ATP hydrolyzed, thus driving DNA branch migration. The RuvB motors rotate together with the DNA substrate, which together with the progressing nucleotide cycle form the mechanistic basis for DNA recombination by continuous HJ branch migration. Branch migration allows RuvC to scan DNA until it finds its consensus sequence, where it cleaves and resolves cruciform DNA. The protein is Holliday junction branch migration complex subunit RuvB of Xanthomonas campestris pv. campestris (strain ATCC 33913 / DSM 3586 / NCPPB 528 / LMG 568 / P 25).